Reading from the N-terminus, the 245-residue chain is Demethylmenaquinone methyltransferase (245 aa).

Residues Thr-70, Asp-90, and 118 to 119 each bind S-adenosyl-L-methionine; that span reads DC.

It belongs to the class I-like SAM-binding methyltransferase superfamily. MenG/UbiE family.

It carries out the reaction a 2-demethylmenaquinol + S-adenosyl-L-methionine = a menaquinol + S-adenosyl-L-homocysteine + H(+). The protein operates within quinol/quinone metabolism; menaquinone biosynthesis; menaquinol from 1,4-dihydroxy-2-naphthoate: step 2/2. Functionally, methyltransferase required for the conversion of demethylmenaquinol (DMKH2) to menaquinol (MKH2). The polypeptide is Demethylmenaquinone methyltransferase (Bacteroides fragilis (strain ATCC 25285 / DSM 2151 / CCUG 4856 / JCM 11019 / LMG 10263 / NCTC 9343 / Onslow / VPI 2553 / EN-2)).